The primary structure comprises 633 residues: UvrABC system protein C (633 aa).

One can recognise a GIY-YIG domain in the interval 37–115 (PKPGVYRMFG…IKSLKPRFNI (79 aa)). A UVR domain is found at 225–260 (NALREDLQTRMAQASEAMDFETAAKLRDRIRAIAAV).

Belongs to the UvrC family. As to quaternary structure, interacts with UvrB in an incision complex.

Its subcellular location is the cytoplasm. Functionally, the UvrABC repair system catalyzes the recognition and processing of DNA lesions. UvrC both incises the 5' and 3' sides of the lesion. The N-terminal half is responsible for the 3' incision and the C-terminal half is responsible for the 5' incision. The chain is UvrABC system protein C from Maricaulis maris (strain MCS10) (Caulobacter maris).